Reading from the N-terminus, the 242-residue chain is KKCIQSEDKKWFTPREFEIEGDRRASKNWKLSIRCGGYTLKFLMENKLLPEPPSTRKKRILKSHNNTLVDPCAVHKKKNPDASVNLSEFLKKCSEMWKTIFAKEKGKFEDMAKADKAHYEREMKTYIPSKGEKKKKFKDPNAPKRPPLAFFLFCSEYRPKIKGEHPGLSIDDVVKKLAEMWNNTAAADKQFYEKKAAKLKEKYKKDIAADRAKGKPNSAKKRVVKAEKSKKKKEEEEDEVDE.

Positions 1–50 (KKCIQSEDKKWFTPREFEIEGDRRASKNWKLSIRCGGYTLKFLMENKLLP) constitute an SAND domain. DNA-binding regions (HMG box) lie at residues 51-127 (EPPS…KTYI) and 143-211 (PKRP…AADR). Positions 91 to 108 (KKCSEMWKTIFAKEKGKF) match the Nuclear localization signal motif. The disordered stretch occupies residues 205–242 (KDIAADRAKGKPNSAKKRVVKAEKSKKKKEEEEDEVDE). Residues 218-231 (SAKKRVVKAEKSKK) show a composition bias toward basic residues.

In terms of assembly, homodimer. Interacts with members of the HP1 family of nonhistone chromosomal protein, such as CBX5 and CBX3 via the PxVxL motif. Interacts with ETS1; the interaction is direct and modulates ETS1 transcriptional activity. Interacts with the MRN complex which is composed of two heterodimers RAD50/MRE11 associated with a single NBN; recruits the complex to PML-related bodies. Interacts with HIPK2; positively regulates TP53-dependent transcription. Interacts with CASP8AP2; may negatively regulate CASP8AP2 export from the nucleus to the cytoplasm. In terms of processing, sumoylated. Sumoylated with SUMO1. Sumoylation depends on a functional nuclear localization signal but is not necessary for nuclear import or nuclear body targeting. Sumoylation may stabilize the interaction with CBX5. Phosphorylated.

Its subcellular location is the nucleus. The protein resides in the PML body. It is found in the nuclear body. The protein localises to the cytoplasm. Functionally, together with PML, this tumor suppressor is a major constituent of the PML bodies, a subnuclear organelle involved in a large number of physiological processes including cell growth, differentiation and apoptosis. Functions as a transcriptional coactivator of ETS1 and ETS2. Under certain conditions, it may also act as a corepressor of ETS1 preventing its binding to DNA. Through the regulation of ETS1 it may play a role in angiogenesis, controlling endothelial cell motility and invasion. Through interaction with the MRN complex it may be involved in the regulation of telomeres lengthening. May also regulate TP53-mediated transcription and through CASP8AP2, regulate FAS-mediated apoptosis. May also play a role in infection by viruses through mechanisms that may involve chromatin and/or transcriptional regulation. The protein is Nuclear autoantigen Sp-100 (SP100) of Hylobates lar (Lar gibbon).